The primary structure comprises 108 residues: Parvalbumin beta (108 aa).

A1 is modified (N-acetylalanine). The cysteines at positions 11 and 33 are disulfide-linked. 2 consecutive EF-hand domains span residues 38-73 and 77-108; these read KSAD…FKAG and LTDA…LVKA. Residues D51, D53, S55, F57, E59, E62, D90, D92, D94, A96, and E101 each contribute to the Ca(2+) site.

The protein belongs to the parvalbumin family.

In terms of biological role, in muscle, parvalbumin is thought to be involved in relaxation after contraction. It binds two calcium ions. The polypeptide is Parvalbumin beta (Merlangius merlangus (Whiting)).